The chain runs to 776 residues: 5-methyltetrahydropteroyltriglutamate--homocysteine methyltransferase (776 aa).

5-methyltetrahydropteroyltri-L-glutamate is bound by residues 13 to 16 (RELK) and Lys-127. L-homocysteine contacts are provided by residues 450 to 452 (IGS) and Glu-503. L-methionine-binding positions include 450-452 (IGS) and Glu-503. A 5-methyltetrahydropteroyltri-L-glutamate-binding site is contributed by Trp-580. Asp-618 provides a ligand contact to L-homocysteine. Residue Asp-618 coordinates L-methionine. 5-methyltetrahydropteroyltri-L-glutamate is bound at residue Glu-624. The Zn(2+) site is built by His-660, Cys-662, and Glu-684. Catalysis depends on His-713, which acts as the Proton donor. Cys-745 provides a ligand contact to Zn(2+).

It belongs to the vitamin-B12 independent methionine synthase family. Zn(2+) is required as a cofactor.

The catalysed reaction is 5-methyltetrahydropteroyltri-L-glutamate + L-homocysteine = tetrahydropteroyltri-L-glutamate + L-methionine. The protein operates within amino-acid biosynthesis; L-methionine biosynthesis via de novo pathway; L-methionine from L-homocysteine (MetE route): step 1/1. Catalyzes the transfer of a methyl group from 5-methyltetrahydrofolate to homocysteine resulting in methionine formation. The polypeptide is 5-methyltetrahydropteroyltriglutamate--homocysteine methyltransferase (Mesorhizobium japonicum (strain LMG 29417 / CECT 9101 / MAFF 303099) (Mesorhizobium loti (strain MAFF 303099))).